The chain runs to 325 residues: Probable cell division protein WhiA (325 aa).

Positions 280–313 (SLKELGNMLEKPLGKSGVNHRLRKIDKIAEELRK) form a DNA-binding region, H-T-H motif.

It belongs to the WhiA family.

Its function is as follows. Involved in cell division and chromosome segregation. This chain is Probable cell division protein WhiA, found in Caldicellulosiruptor bescii (strain ATCC BAA-1888 / DSM 6725 / KCTC 15123 / Z-1320) (Anaerocellum thermophilum).